Consider the following 334-residue polypeptide: L-lactate dehydrogenase B chain (334 aa).

Gly30–Lys58 contributes to the NAD(+) binding site. The substrate site is built by Arg107, Asn139, and Arg170. Position 139 (Asn139) interacts with NAD(+). His194 (proton acceptor) is an active-site residue. Thr249 is a binding site for substrate.

This sequence belongs to the LDH/MDH superfamily. LDH family. Homotetramer.

The protein localises to the cytoplasm. The catalysed reaction is (S)-lactate + NAD(+) = pyruvate + NADH + H(+). It participates in fermentation; pyruvate fermentation to lactate; (S)-lactate from pyruvate: step 1/1. In terms of biological role, interconverts simultaneously and stereospecifically pyruvate and lactate with concomitant interconversion of NADH and NAD(+). The chain is L-lactate dehydrogenase B chain (ldhb) from Xenopus laevis (African clawed frog).